Reading from the N-terminus, the 1063-residue chain is Exportin-T (1063 aa).

Belongs to the exportin family.

It localises to the nucleus. The protein resides in the cytoplasm. Functionally, tRNA nucleus export receptor which facilitates tRNA translocation across the nuclear pore complex. Involved in pre-tRNA splicing, probably by affecting the interaction of pre-tRNA with splicing endonuclease. This chain is Exportin-T (LOS1), found in Kluyveromyces lactis (strain ATCC 8585 / CBS 2359 / DSM 70799 / NBRC 1267 / NRRL Y-1140 / WM37) (Yeast).